Reading from the N-terminus, the 82-residue chain is Putative membrane protein insertion efficiency factor (82 aa).

This sequence belongs to the UPF0161 family.

It localises to the cell inner membrane. Its function is as follows. Could be involved in insertion of integral membrane proteins into the membrane. The protein is Putative membrane protein insertion efficiency factor of Rickettsia rickettsii (strain Iowa).